The primary structure comprises 278 residues: 1-acyl-sn-glycerol-3-phosphate acyltransferase beta (278 aa).

A signal peptide spans M1–T23. Over A24 to K29 the chain is Lumenal. Residues V30–L50 form a helical membrane-spanning segment. Residues R51–R121 lie on the Cytoplasmic side of the membrane. Positions H98–D103 match the HXXXXD motif motif. Residues E122–N142 traverse the membrane as a helical segment. Residues R143 to Q278 lie on the Lumenal side of the membrane. An EGTR motif motif is present at residues E172 to R175.

It belongs to the 1-acyl-sn-glycerol-3-phosphate acyltransferase family. In terms of tissue distribution, expressed at high levels in the liver, at intermediate levels in the kidney, gut, heart and skeletal muscles. Undetectable in brain and spleen.

The protein localises to the endoplasmic reticulum membrane. It carries out the reaction a 1-acyl-sn-glycero-3-phosphate + an acyl-CoA = a 1,2-diacyl-sn-glycero-3-phosphate + CoA. The enzyme catalyses 1-(9Z-octadecenoyl)-sn-glycero-3-phosphate + (9Z)-octadecenoyl-CoA = 1,2-di-(9Z-octadecenoyl)-sn-glycero-3-phosphate + CoA. It catalyses the reaction 1-(9Z-octadecenoyl)-sn-glycero-3-phosphate + hexadecanoyl-CoA = 1-(9Z)-octadecenoyl-2-hexadecanoyl-sn-glycero-3-phosphate + CoA. The catalysed reaction is heptadecanoyl-CoA + 1-(9Z-octadecenoyl)-sn-glycero-3-phosphate = 1-(9Z)-octadecenoyl-2-heptadecanoyl-sn-glycero-3-phosphate + CoA. It carries out the reaction 1-(9Z-octadecenoyl)-sn-glycero-3-phosphate + (9Z,12Z)-octadecadienoyl-CoA = 1-(9Z)-octadecenoyl-2-(9Z,12Z)-octadecadienoyl-sn-glycero-3-phosphate + CoA. The enzyme catalyses 1-(9Z-octadecenoyl)-sn-glycero-3-phosphate + tetradecanoyl-CoA = 1-(9Z)-octadecenoyl-2-tetradecanoyl-sn-glycero-3-phosphate + CoA. It catalyses the reaction pentadecanoyl-CoA + 1-(9Z-octadecenoyl)-sn-glycero-3-phosphate = 1-(9Z)-octadecenoyl-2-pentadecanoyl-sn-glycero-3-phosphate + CoA. The catalysed reaction is 1-hexadecanoyl-sn-glycero-3-phosphate + (9Z)-octadecenoyl-CoA = 1-hexadecanoyl-2-(9Z-octadecenoyl)-sn-glycero-3-phosphate + CoA. It carries out the reaction 1-tetradecanoyl-sn-glycerol 3-phosphate + (9Z)-octadecenoyl-CoA = 1-tetradecanoyl-2-(9Z)-octadecenoyl-sn-glycero-3-phosphate + CoA. The enzyme catalyses 1-(9Z,12Z,15Z)-octadecatrienoyl-sn-glycero-3-phosphate + (9Z)-octadecenoyl-CoA = 1-(9Z,12Z,15Z)-octadecatrienoyl-2-(9Z)-octadecenoyl-sn-glycero-3-phosphate + CoA. It catalyses the reaction 1-(6Z,9Z,12Z-octadecatrienoyl)-sn-glycero-3-phosphate + (9Z)-octadecenoyl-CoA = (6Z,9Z,12Z)-octadecatrienoyl-2-(9Z)-octadecenoyl-sn-glycero-3-phosphate + CoA. The catalysed reaction is 1-eicosanoyl-sn-glycero-3-phosphate + (9Z)-octadecenoyl-CoA = 1-eicosanoyl-2-(9Z)-octadecenoyl-sn-glycero-3-phosphate + CoA. It carries out the reaction 1-hexadecanoyl-sn-glycero-3-phosphate + octadecanoyl-CoA = 1-hexadecanoyl-2-octadecanoyl-sn-glycero-3-phosphate + CoA. The enzyme catalyses 1-hexadecanoyl-sn-glycero-3-phosphate + (5Z,8Z,11Z,14Z)-eicosatetraenoyl-CoA = 1-hexadecanoyl-2-(5Z,8Z,11Z,14Z-eicosatetraenoyl)-sn-glycero-3-phosphate + CoA. It catalyses the reaction 1-hexadecanoyl-sn-glycero-3-phosphate + hexadecanoyl-CoA = 1,2-dihexadecanoyl-sn-glycero-3-phosphate + CoA. The catalysed reaction is 1-hexadecanoyl-sn-glycero-3-phosphate + tetradecanoyl-CoA = 1-hexadecanoyl-2-tetradecanoyl-sn-glycero-3-phosphate + CoA. It carries out the reaction (11Z)-octadecenoyl-CoA + 1-(9Z-octadecenoyl)-sn-glycero-3-phosphate = 1-(9Z)-octadecenoyl-2-(11Z)-octadecenoyl-sn-glycero-3-phosphate + CoA. It functions in the pathway phospholipid metabolism; CDP-diacylglycerol biosynthesis; CDP-diacylglycerol from sn-glycerol 3-phosphate: step 2/3. In terms of biological role, converts 1-acyl-sn-glycerol-3-phosphate (lysophosphatidic acid or LPA) into 1,2-diacyl-sn-glycerol-3-phosphate (phosphatidic acid or PA) by incorporating an acyl moiety at the sn-2 position of the glycerol backbone. This chain is 1-acyl-sn-glycerol-3-phosphate acyltransferase beta (Agpat2), found in Mus musculus (Mouse).